We begin with the raw amino-acid sequence, 785 residues long: Cadherin-7 (785 aa).

The signal sequence occupies residues 1 to 27; it reads MKLGKVELCHFLQLIALFLCFSGMSQA. The propeptide occupies 28–47; sequence ELPRSRSKPYFQSGRSRTKR. Residues 28-607 lie on the Extracellular side of the membrane; it reads ELPRSRSKPY…AYVLPAGLST (580 aa). 5 consecutive Cadherin domains span residues 49 to 153, 154 to 262, 263 to 377, 378 to 482, and 482 to 599; these read WVWN…EPKF, LDGP…PPRF, PRRS…PPVF, SSPL…APEF, and FAMD…AEAY. Asn-449 and Asn-530 each carry an N-linked (GlcNAc...) asparagine glycan. Residues 608-628 form a helical membrane-spanning segment; sequence GALIAILACVLTLLVLILLIV. At 629-785 the chain is on the cytoplasmic side; it reads TMRRRKKEPL…YGNGQESLYS (157 aa).

It is found in the cell membrane. Cadherins are calcium-dependent cell adhesion proteins. They preferentially interact with themselves in a homophilic manner in connecting cells; cadherins may thus contribute to the sorting of heterogeneous cell types. The chain is Cadherin-7 (Cdh7) from Mus musculus (Mouse).